A 273-amino-acid polypeptide reads, in one-letter code: NH(3)-dependent NAD(+) synthetase (273 aa).

46 to 53 (GISGGQDS) is a binding site for ATP. Asp52 lines the Mg(2+) pocket. Arg139 serves as a coordination point for deamido-NAD(+). Residue Thr159 coordinates ATP. Position 164 (Glu164) interacts with Mg(2+). Lys172 and Asp179 together coordinate deamido-NAD(+). The ATP site is built by Lys188 and Thr210. 259 to 260 (HK) provides a ligand contact to deamido-NAD(+).

This sequence belongs to the NAD synthetase family. Homodimer.

It catalyses the reaction deamido-NAD(+) + NH4(+) + ATP = AMP + diphosphate + NAD(+) + H(+). Its pathway is cofactor biosynthesis; NAD(+) biosynthesis; NAD(+) from deamido-NAD(+) (ammonia route): step 1/1. Its function is as follows. Catalyzes the ATP-dependent amidation of deamido-NAD to form NAD. Uses ammonia as a nitrogen source. The sequence is that of NH(3)-dependent NAD(+) synthetase from Streptococcus agalactiae serotype Ia (strain ATCC 27591 / A909 / CDC SS700).